The primary structure comprises 265 residues: Membrane steroid-binding protein 2 (265 aa).

Residues 63-85 (WAAARSASPVAVIAAVAGAAVVY) traverse the membrane as a helical segment. The segment at 94–116 (PPPPPARPREEPSEEAPPPPEPV) is disordered. In terms of domain architecture, Cytochrome b5 heme-binding spans 118 to 217 (VGEITAEELL…SKYVKVGTIK (100 aa)). The tract at residues 120-217 (EITAEELLQY…SKYVKVGTIK (98 aa)) is steroid-binding.

It belongs to the cytochrome b5 family. MAPR subfamily.

The protein resides in the cell membrane. Binds multiple steroid compounds. The sequence is that of Membrane steroid-binding protein 2 from Oryza sativa subsp. japonica (Rice).